A 1165-amino-acid polypeptide reads, in one-letter code: Transient receptor potential cation channel subfamily M member 5 (1165 aa).

The Cytoplasmic segment spans residues 1–715 (MVEKSSERFD…LRRWNRFWSA (715 aa)). S121 carries the phosphoserine modification. Ca(2+) contacts are provided by E212, C324, D333, D336, and E337. A helical transmembrane segment spans residues 716–740 (PVTVFMGNVIMYFAFLILFSYVLLL). The Extracellular segment spans residues 741–751 (DFRPPPPYGPS). Residues 752–771 (AAEIILYFWVFTLVLEEIRQ) form a helical membrane-spanning segment. E768 and Q771 together coordinate Ca(2+). Topologically, residues 772–792 (SFFTDEDMSILKKMKLYVEDN) are cytoplasmic. The helical transmembrane segment at 793–811 (WNKCDMVAISLFVVGLSCR) threads the bilayer. Ca(2+) is bound by residues N794 and D797. Residues 812-818 (MAMSTYE) are Extracellular-facing. The helical transmembrane segment at 819 to 841 (AGRTVLALDFMVFTLRLIHIFAI) threads the bilayer. Residues 842-850 (HKQLGPKII) are Cytoplasmic-facing. Residues 851–880 (IVERMIKDVFFFLFFLSVWLIAYGVTTQAL) traverse the membrane as a helical segment. The Extracellular segment spans residues 881-889 (LHPNDPRID). The segment at residues 890–930 (WVFRRALYRPYLHIFGQIPLEEIDAAKMPDDNCTTDVQEII) is an intramembrane region (pore-forming). The Selectivity filter signature appears at 904-906 (FGQ). Topologically, residues 931 to 942 (LGTLPPCPNIYA) are extracellular. A helical transmembrane segment spans residues 943-977 (NWLVILLLVIYLLVTNVLLLNLLIAMFSYTFQVVQ). Over 978–1165 (ENADIFWKFQ…TDKKLPFIDH (188 aa)) the chain is Cytoplasmic. Residue E994 participates in Ca(2+) binding. Positions 1122 to 1165 (RDAPKAPRSIAGSSRDQQPQGAKRQQPAGHPAYGTDKKLPFIDH) are disordered. The segment covering 1132–1141 (AGSSRDQQPQ) has biased composition (polar residues). Basic and acidic residues predominate over residues 1156–1165 (TDKKLPFIDH).

Belongs to the transient receptor (TC 1.A.4) family. LTrpC subfamily. TRPM5 sub-subfamily. Homotetramer.

The protein resides in the cell membrane. The catalysed reaction is Na(+)(in) = Na(+)(out). It catalyses the reaction K(+)(in) = K(+)(out). Its activity is regulated as follows. Ca(2+)-activated cation channel. Displays voltage dependence modulation. Regulated by PI(4,5)P2 levels. PI(4,5)P 2 reverses the Ca(2+) -induced desensitization of channels. Is highly temperature-sensitive. In terms of biological role, monovalent cation-selective ion channel activated by intracellular Ca(2+) in a voltage- and temperature-dependent manner. Mediates the transport of Na(+), K(+) and Cs(+) ions equally well. Activated directly by increase in intracellular Ca(2+), but is impermeable to it. The activation mechanism of TRPM5 involves a multistep process. TRPM5 activation involves ligand binding (i.e., tastant molecule, glucose stimulation) to Gq/G-protein coupled receptors (GPCR) and leads to the breakdown of phosphatidylinositol bisphosphate (PIP2) into diacylglycerol (DAG) and inositol trisphosphate (IP3), IP3 binds to its receptors in the endoplasmic reticulum and cause Ca(2+) release. Simultaneously with the intracellular Ca(2+) release, DAG activates the protein kinase C (PKC), which phosphorylates the TRPM5 channel. This phosphorylation combined with the bound Ca(2+), leads to a robust inward current allowing the entry of sodium ions (Na+) into the cell. This ion influx depolarizes the cell membrane, generating action potentials that propagate TRPM5 signals. The sequence is that of Transient receptor potential cation channel subfamily M member 5 from Danio rerio (Zebrafish).